The following is a 226-amino-acid chain: Urease accessory protein UreG (226 aa).

The interval methionine 1–proline 26 is disordered. Glycine 33–threonine 40 serves as a coordination point for GTP.

Belongs to the SIMIBI class G3E GTPase family. UreG subfamily. As to quaternary structure, homodimer. UreD, UreF and UreG form a complex that acts as a GTP-hydrolysis-dependent molecular chaperone, activating the urease apoprotein by helping to assemble the nickel containing metallocenter of UreC. The UreE protein probably delivers the nickel.

The protein resides in the cytoplasm. Its function is as follows. Facilitates the functional incorporation of the urease nickel metallocenter. This process requires GTP hydrolysis, probably effectuated by UreG. The chain is Urease accessory protein UreG from Mycolicibacterium vanbaalenii (strain DSM 7251 / JCM 13017 / BCRC 16820 / KCTC 9966 / NRRL B-24157 / PYR-1) (Mycobacterium vanbaalenii).